The chain runs to 462 residues: Retinoic acid receptor alpha (462 aa).

A modulating region spans residues 1-87 (MASNSSSCPT…PPPLPRIYKP (87 aa)). Residues 52-64 (GYSTPSPATIETQ) show a composition bias toward polar residues. Residues 52 to 77 (GYSTPSPATIETQSSSSEEIVPSPPS) form a disordered region. At S77 the chain carries Phosphoserine; by CDK7. NR C4-type zinc fingers lie at residues 88–108 (CFVC…CEGC) and 124–148 (CHRD…LQKC). A DNA-binding region (nuclear receptor) is located at residues 88 to 153 (CFVCQDKSSG…RLQKCFEVGM (66 aa)). A Phosphoserine; by PKB/AKT1 modification is found at S96. The interval 154 to 182 (SKESVRNDRNKKKKEVPKPECSESYTLTP) is hinge. Glycyl lysine isopeptide (Lys-Gly) (interchain with G-Cter in SUMO) cross-links involve residues K166 and K171. One can recognise an NR LBD domain in the interval 183 to 417 (EVGELIEKVR…PLIQEMLENS (235 aa)). S219 carries the phosphoserine; by PKA modification. An all-trans-retinoate-binding site is contributed by C235. Positions 254 to 258 (IADQI) match the UBR5-degron motif. Residue S287 participates in all-trans-retinoate binding. S369 carries the post-translational modification Phosphoserine; by PKA. A Glycyl lysine isopeptide (Lys-Gly) (interchain with G-Cter in SUMO) cross-link involves residue K399. Residues 404–419 (GSMPPLIQEMLENSEG) form a required for binding corepressor NCOR1 region. The 9aaTAD motif lies at 408–416 (PLIQEMLEN). Positions 419–462 (GLDTLSGQPGGGGRDGGGLAPPPGSCSPSLSPSSNRSSPATHSP) are disordered. The span at 426–437 (QPGGGGRDGGGL) shows a compositional bias: gly residues. The segment covering 444 to 462 (CSPSLSPSSNRSSPATHSP) has biased composition (low complexity).

The protein belongs to the nuclear hormone receptor family. NR1 subfamily. As to quaternary structure, heterodimer; with RXRA (via C-terminus); association with RXRA is enhanced by pulsatile shear stress. Binds DNA preferentially as a heterodimer. RXRA serves as enhancer to induce RARA binding to RARE. Interacts with RXRG. Interacts with coactivators NCOA3 and NCOA6. Interacts with NCOA7; the interaction requires ligand-binding. Interacts (via the ligand-binding domain) with PRAME; the interaction is ligand (retinoic acid)-dependent. Interacts with AKT1; the interaction phosphorylates RARA and represses transactivation. Interacts with PRKAR1A; the interaction negatively regulates RARA transcriptional activity. Interacts with NCOR1 and NCOR2. Interacts with PRMT2. Interacts with LRIF1. Interacts with ASXL1 and NCOA1. Interacts with ACTN4. In a complex with HDAC3, HDAC5 and HDAC7; the HDACs serve as corepressors of RARA, causing its deacetylation and inhibition of RARE DNA element binding; association with HDAC3, HDAC5 and HDAC7 is increased upon oscillatory shear stress. Interacts with CDK7. In the absence of hormonal ligand, interacts with TACC1. Post-translationally, phosphorylated on serine and threonine residues. Phosphorylation does not change during cell cycle. Phosphorylation on Ser-77 is crucial for transcriptional activity. Phosphorylation by AKT1 is required for the repressor activity but has no effect on DNA binding, protein stability nor subcellular localization. Phosphorylated by PKA in vitro. This phosphorylation on Ser-219 and Ser-369 is critical for ligand binding, nuclear localization and transcriptional activity in response to FSH signaling. In terms of processing, sumoylated with SUMO2, mainly on Lys-399 which is also required for SENP6 binding. On all-trans retinoic acid (ATRA) binding, a conformational change may occur that allows sumoylation on two additional site, Lys-166 and Lys-171. Probably desumoylated by SENP6. Sumoylation levels determine nuclear localization and regulate ATRA-mediated transcriptional activity. Trimethylation enhances heterodimerization with RXRA and positively modulates the transcriptional activation. Post-translationally, ubiquitinated by UBR5, leading to its degradation: UBR5 specifically recognizes and binds ligand-bound RARA when it is not associated with coactivators (NCOAs). In presence of NCOAs, the UBR5-degron is not accessible, preventing its ubiquitination and degradation. In terms of processing, acetylated; acetylation is increased upon pulsatile shear stress and decreased upon oscillatory shear stress. Expressed in monocytes.

Its subcellular location is the nucleus. The protein resides in the cytoplasm. In terms of biological role, receptor for retinoic acid. Retinoic acid receptors bind as heterodimers to their target response elements in response to their ligands, all-trans or 9-cis retinoic acid, and regulate gene expression in various biological processes. The RXR/RAR heterodimers bind to the retinoic acid response elements (RARE) composed of tandem 5'-AGGTCA-3' sites known as DR1-DR5. In the absence of ligand, the RXR-RAR heterodimers associate with a multiprotein complex containing transcription corepressors that induce histone deacetylation, chromatin condensation and transcriptional suppression. On ligand binding, the corepressors dissociate from the receptors and associate with the coactivators leading to transcriptional activation. Formation of a complex with histone deacetylases might lead to inhibition of RARE DNA element binding and to transcriptional repression. Transcriptional activation and RARE DNA element binding might be supported by the transcription factor KLF2. RARA plays an essential role in the regulation of retinoic acid-induced germ cell development during spermatogenesis. Has a role in the survival of early spermatocytes at the beginning prophase of meiosis. In Sertoli cells, may promote the survival and development of early meiotic prophase spermatocytes. In concert with RARG, required for skeletal growth, matrix homeostasis and growth plate function. Together with RXRA, positively regulates microRNA-10a expression, thereby inhibiting the GATA6/VCAM1 signaling response to pulsatile shear stress in vascular endothelial cells. In association with HDAC3, HDAC5 and HDAC7 corepressors, plays a role in the repression of microRNA-10a and thereby promotes the inflammatory response. The protein is Retinoic acid receptor alpha (RARA) of Homo sapiens (Human).